A 1260-amino-acid polypeptide reads, in one-letter code: MALIRRAKNKVAPQKRAETTIKKATFDATKKKEVGVSDLTLLSSISDDAINQNLKKRFENGTIYTYIGHVLISVNPFRDLGIYTDAVLESYKGKNRLEVPPHVFAIAEAMYYNLKAYNENQCVIISGESGAGKTEAAKRIMQYIAAASSTHEASIGKIKDMVLATNPLLESFGCAKTLRNNNSSRHGKYLEIRFNEQFEPCAGQITNYLLEKQRVVGQIRNERNFHIFYQFTKGASDTYRQNFGVLQPDQYIYTSASGCTSVDTIDDLHDYQETIKAMQVIGLSQEEQDQIFRMLSAILWIGNVTFVENNEGNAEVRDTSVTDFVAYLMQVDSGLLIKCLVERVMETGHGSRRGSVYHVPLNVVQATAVRDALAKAIYNNLFDWIVDRVNVSLKAFPGAVKSIGILDIYGFEIFEHNSFEQICINYVNEKLQQIFIQLTLKSEQEEYNKEQIQWTPIKYFDNKVVCDLIESKRPPGIFATLDDSVATAHADSNAADQAFAQRLNLFSTNAHFDLRSSKFVIKHYAGDVTYDISGMTDKNKDQLVKDLAELVQTTTNPFLSTIFPDTIDKSSKRRPPTAGNKIIKSANELVETLSKAQPSYIRTIKPNQTKSPRDYDDQQVLHQVKYLGLQENVRIRRAGFAYRQTFEKFVERFYLLSPKCSYAGDYTWQGDTLGAVKQILQDASIPTTEYQLGVTKVFIKTPETLFALEHMRDRYWYNMAARIQRAWRRFIQRRIDSAIKIQRAIREKKGGNQYEQLRDYGHRLLGGRKERRAMSLLGYRAFMGDYLSCNEMKSKGAFIKRQAGISEIVVFSIKGEALHSKFGRSAVRLPITIILTPTTLYIVGQTVAQNQVSYTVDRKVNISHIKHVSLTNLADDWVGIYVQGENLPDPFINTIFKTELITHLKQLNRAIEVKIGPTIEYQKKPGKLHTVKCQISESAPKYSDIYKSSTISVRQGRPANSRQAPKPEKKSTLLSDGPSYNSNQSKGYGQQQHAQPSYGQQQQQQQRYAPQSHATPQTTQKKRAPPPPGQQNFAASAAQTAYHPQQASHARVPSTNNAHTQHNRQPAQQAAQPVQQAAQPAATTSQPTRRVAPPPPPPPPTKQNIPKFQAAYDFTGTGSASELPLSKGTVITVSKQDPSGWSLGKLLDGSKEGWVPTNYIVEYKESSGPPPPPAPPVASSTTGYANSNNNAFAANDNVAAVAGAAAGATAGAAVAAASLANPGQNAFSVGLADALAARANTMRLESDDESTGNADEDDDW.

Positions 34–713 constitute a Myosin motor domain; the sequence is VGVSDLTLLS…TLFALEHMRD (680 aa). 127 to 134 provides a ligand contact to ATP; the sequence is GESGAGKT. Residue serine 355 is modified to Phosphoserine. The tract at residues 402-484 is actin-binding; the sequence is SIGILDIYGF…PGIFATLDDS (83 aa). IQ domains are found at residues 717–737 and 738–763; these read YNMA…RIDS and AIKI…YGHR. The TH1 domain occupies 769-959; sequence KERRAMSLLG…TISVRQGRPA (191 aa). Composition is skewed to polar residues over residues 948 to 963 and 972 to 988; these read SSTI…NSRQ and TLLS…SKGY. A disordered region spans residues 948–1106; the sequence is SSTISVRQGR…PPPPTKQNIP (159 aa). Low complexity predominate over residues 989 to 1013; the sequence is GQQQHAQPSYGQQQQQQQRYAPQSH. Positions 1030–1064 are enriched in polar residues; that stretch reads QQNFAASAAQTAYHPQQASHARVPSTNNAHTQHNR. Residues 1065–1082 show a composition bias toward low complexity; it reads QPAQQAAQPVQQAAQPAA. The span at 1092–1101 shows a compositional bias: pro residues; the sequence is APPPPPPPPT. The region spanning 1103-1165 is the SH3 domain; sequence QNIPKFQAAY…PTNYIVEYKE (63 aa).

The protein belongs to the TRAFAC class myosin-kinesin ATPase superfamily. Myosin family. Phosphorylation of the TEDS site (Ser-355) is required for the polarization of the actin cytoskeleton. Phosphorylation probably activates the myosin-I ATPase activity.

It localises to the cytoplasm. It is found in the cytoskeleton. The protein localises to the actin patch. Its function is as follows. Type-I myosin implicated in the organization of the actin cytoskeleton. Required for proper actin cytoskeleton polarization. At the cell cortex, assembles in patch-like structures together with proteins from the actin-polymerizing machinery and promotes actin assembly. Functions as actin nucleation-promoting factor (NPF) for the Arp2/3 complex. The protein is Myosin-1 (MYO1) of Kluyveromyces lactis (strain ATCC 8585 / CBS 2359 / DSM 70799 / NBRC 1267 / NRRL Y-1140 / WM37) (Yeast).